The following is a 268-amino-acid chain: Undecaprenyl-diphosphatase (268 aa).

8 helical membrane-spanning segments follow: residues 3–23, 46–66, 84–104, 107–127, 144–164, 184–204, 218–238, and 248–268; these read VFNL…EFIP, FEVL…SAKL, FGIL…HGFI, VLFE…FILL, YPLP…IPGV, AAEF…AYDL, LIGV…RYLL, and LFGW…LVWG.

It belongs to the UppP family.

The protein localises to the cell inner membrane. The catalysed reaction is di-trans,octa-cis-undecaprenyl diphosphate + H2O = di-trans,octa-cis-undecaprenyl phosphate + phosphate + H(+). Its function is as follows. Catalyzes the dephosphorylation of undecaprenyl diphosphate (UPP). Confers resistance to bacitracin. The polypeptide is Undecaprenyl-diphosphatase (Brucella anthropi (strain ATCC 49188 / DSM 6882 / CCUG 24695 / JCM 21032 / LMG 3331 / NBRC 15819 / NCTC 12168 / Alc 37) (Ochrobactrum anthropi)).